The sequence spans 219 residues: Mediator of RNA polymerase II transcription subunit 20b (219 aa).

Belongs to the Mediator complex subunit 20 family. As to quaternary structure, component of the Mediator complex.

Its subcellular location is the nucleus. Component of the Mediator complex, a coactivator involved in the regulated transcription of nearly all RNA polymerase II-dependent genes. Mediator functions as a bridge to convey information from gene-specific regulatory proteins to the basal RNA polymerase II transcription machinery. The Mediator complex, having a compact conformation in its free form, is recruited to promoters by direct interactions with regulatory proteins and serves for the assembly of a functional preinitiation complex with RNA polymerase II and the general transcription factors. The polypeptide is Mediator of RNA polymerase II transcription subunit 20b (MED20B) (Arabidopsis thaliana (Mouse-ear cress)).